Here is an 85-residue protein sequence, read N- to C-terminus: Cell division topological specificity factor (85 aa).

Belongs to the MinE family.

Its function is as follows. Prevents the cell division inhibition by proteins MinC and MinD at internal division sites while permitting inhibition at polar sites. This ensures cell division at the proper site by restricting the formation of a division septum at the midpoint of the long axis of the cell. The chain is Cell division topological specificity factor from Xanthomonas campestris pv. campestris (strain 8004).